The primary structure comprises 231 residues: MGNSVMEKIKGGLVVSCQALEDEPLHSAFIMSKMALAAVQGGAVGIRANTAKDIRAIQSEVDVPIIGIYKKDYDDSDVFITPTLKEVREICETGVEIVAMDATTRKRPHNEDLKDILSAIRKEFPNTLFMADTGSIEDVYYADSLGFDLIGTTLYGYTEETANKNISDHDFSHMKEVLKSTKRPVIAEGKIDSPSKARQVLTLGCYAVVVGGAVTRPQEITTRFTNEIKKI.

It belongs to the NanE family.

The catalysed reaction is an N-acyl-D-glucosamine 6-phosphate = an N-acyl-D-mannosamine 6-phosphate. It functions in the pathway amino-sugar metabolism; N-acetylneuraminate degradation; D-fructose 6-phosphate from N-acetylneuraminate: step 3/5. Functionally, converts N-acetylmannosamine-6-phosphate (ManNAc-6-P) to N-acetylglucosamine-6-phosphate (GlcNAc-6-P). The sequence is that of Putative N-acetylmannosamine-6-phosphate 2-epimerase from Listeria innocua serovar 6a (strain ATCC BAA-680 / CLIP 11262).